We begin with the raw amino-acid sequence, 171 residues long: Galectin-related protein A (171 aa).

The Galectin domain occupies 38–170 (PFCGHIKGGL…INGDLQLTKL (133 aa)).

Its function is as follows. Does not bind lactose, and may not bind carbohydrates. In Xenopus laevis (African clawed frog), this protein is Galectin-related protein A (lgalsl-a).